Here is a 442-residue protein sequence, read N- to C-terminus: HTH-type transcriptional regulator NorG (442 aa).

Residues 2 to 46 (KIPSQRQLAIQYNVNRVTIIKSIELLEAEGFIYTKVGSGTYVNDY) enclose the HTH gntR-type domain. Residues 6 to 25 (QRQLAIQYNVNRVTIIKSIE) constitute a DNA-binding region (H-T-H motif). At Lys-288 the chain carries N6-(pyridoxal phosphate)lysine.

It in the C-terminal section; belongs to the class-I pyridoxal-phosphate-dependent aminotransferase family. The cofactor is pyridoxal 5'-phosphate.

Its function is as follows. Positively regulates the expression of the NorB efflux pump and negatively regulates the expression of the AbcA efflux pump. Binds specifically to the promoters of norA, norB and norC and abcA genes. Could also have an aminotransferase activity. This Staphylococcus aureus (strain bovine RF122 / ET3-1) protein is HTH-type transcriptional regulator NorG (norG).